Consider the following 174-residue polypeptide: UPF0316 protein LMHCC_0787 (174 aa).

3 helical membrane passes run 4–24, 36–56, and 62–82; these read GIFIVATIFVVNILYVTIYTV, LAALSSVFEMIIYVVALSLVL, and IANVLAYAIGFGVGIIVGMKI.

This sequence belongs to the UPF0316 family.

It is found in the cell membrane. The protein is UPF0316 protein LMHCC_0787 of Listeria monocytogenes serotype 4a (strain HCC23).